Here is a 29-residue protein sequence, read N- to C-terminus: Myosin heavy chain, muscle (29 aa).

Positions 1–16 are enriched in basic and acidic residues; that stretch reads SKYESEGVARSEELQE. The disordered stretch occupies residues 1-29; sequence SKYESEGVARSEELQEVHQAFADAGRKPI.

Muscle myosin is a hexameric protein that consists of 2 heavy chain subunits (MHC), 2 alkali light chain subunits (MLC) and 2 regulatory light chain subunits (MLC-2).

Its subcellular location is the cytoplasm. It localises to the myofibril. Functionally, muscle contraction. In Bombyx mori (Silk moth), this protein is Myosin heavy chain, muscle.